The chain runs to 75 residues: UPF0352 protein YejL (75 aa).

This sequence belongs to the UPF0352 family.

The chain is UPF0352 protein YejL from Shigella dysenteriae serotype 1 (strain Sd197).